A 204-amino-acid polypeptide reads, in one-letter code: LexA repressor (204 aa).

A DNA-binding region (H-T-H motif) is located at residues 31 to 51; the sequence is VREICAKVGLSSTSTVHGHLS. Active-site for autocatalytic cleavage activity residues include serine 128 and lysine 165.

The protein belongs to the peptidase S24 family. As to quaternary structure, homodimer.

The enzyme catalyses Hydrolysis of Ala-|-Gly bond in repressor LexA.. Its function is as follows. Represses a number of genes involved in the response to DNA damage (SOS response), including recA and lexA. In the presence of single-stranded DNA, RecA interacts with LexA causing an autocatalytic cleavage which disrupts the DNA-binding part of LexA, leading to derepression of the SOS regulon and eventually DNA repair. The chain is LexA repressor from Clostridium acetobutylicum (strain ATCC 824 / DSM 792 / JCM 1419 / IAM 19013 / LMG 5710 / NBRC 13948 / NRRL B-527 / VKM B-1787 / 2291 / W).